The following is a 359-amino-acid chain: Molybdenum import ATP-binding protein ModC (359 aa).

The ABC transporter domain occupies 1–233; the sequence is MSGLTVSIRG…IDAESEGGGV (233 aa). Position 32 to 39 (32 to 39) interacts with ATP; the sequence is GHSGAGKT. One can recognise a Mop domain in the interval 289-355; sequence AISIRNLLPV…VKAVSVDRAA (67 aa).

This sequence belongs to the ABC transporter superfamily. Molybdate importer (TC 3.A.1.8) family. As to quaternary structure, the complex is composed of two ATP-binding proteins (ModC), two transmembrane proteins (ModB) and a solute-binding protein (ModA).

It is found in the cell inner membrane. The enzyme catalyses molybdate(out) + ATP + H2O = molybdate(in) + ADP + phosphate + H(+). Functionally, part of the ABC transporter complex ModABC involved in molybdenum import. Responsible for energy coupling to the transport system. This Brucella abortus (strain 2308) protein is Molybdenum import ATP-binding protein ModC.